The chain runs to 121 residues: Large ribosomal subunit protein uL18 (121 aa).

Belongs to the universal ribosomal protein uL18 family. In terms of assembly, part of the 50S ribosomal subunit; part of the 5S rRNA/L5/L18/L25 subcomplex. Contacts the 5S and 23S rRNAs.

In terms of biological role, this is one of the proteins that bind and probably mediate the attachment of the 5S RNA into the large ribosomal subunit, where it forms part of the central protuberance. The chain is Large ribosomal subunit protein uL18 from Acidovorax ebreus (strain TPSY) (Diaphorobacter sp. (strain TPSY)).